A 642-amino-acid polypeptide reads, in one-letter code: Threonine--tRNA ligase (642 aa).

In terms of domain architecture, TGS spans 1 to 61; the sequence is MPVITLPDGS…ENDAQLSIIT (61 aa). The tract at residues 243-534 is catalytic; it reads DHRKIGKQLD…LTEEFAGFFP (292 aa). Zn(2+) contacts are provided by Cys-334, His-385, and His-511.

The protein belongs to the class-II aminoacyl-tRNA synthetase family. As to quaternary structure, homodimer. Zn(2+) is required as a cofactor.

It localises to the cytoplasm. It catalyses the reaction tRNA(Thr) + L-threonine + ATP = L-threonyl-tRNA(Thr) + AMP + diphosphate + H(+). Its function is as follows. Catalyzes the attachment of threonine to tRNA(Thr) in a two-step reaction: L-threonine is first activated by ATP to form Thr-AMP and then transferred to the acceptor end of tRNA(Thr). Also edits incorrectly charged L-seryl-tRNA(Thr). This is Threonine--tRNA ligase from Enterobacter sp. (strain 638).